Consider the following 1371-residue polypeptide: MNKVYSLKYCPVTGGLIVVSELASRVIKKTCRRLTHILLAGIPAVYLYYPQISQAGIVRSDIAYQIYRDFAENKGLFVPGATDIPVYDKDGKLVGRLDKAPMADFSSVSSNGVATLVSPQYIVSVKHNGGYQSVSFGNGKNTYSLVDRNNHSSVDFHAPRLNKLVTEVIPSAITSEGTKANAYKDTERYTAFYRVGSGTQYTKDKDGNLVKVAGGYAFKTGGTTGVPLISDATIVSNPGQTYNPVNGPLPDYGAPGDSGSPLFAYDEQQKKWVIVAVLRAYAGINGATNWWNVIPTDYLNQVMQDDFDAPVDFVSGLPPLNWTYDKTSGTGTLSQGSKNWTMHGQKDNDLNAGKNLVFSGQNGAIVLKDSVTQGAGYLEFKDSYTVSAESGKTWTGAGIITDKGTNVTWKVNGVAGDNLHKLGEGTLTINGTGVNPGGLKTGDGTVVLNQQADTAGNVQAFSSVNLASGRPTVVLGDARQVNPDNISWGYRGGKLDLNGNAVTFTRLQAADYGAVITNNAQQKSRLLLDLKAQDTNVSVPIGSISPFGGTGTPGNLYSMILNGQTRFYILKSASYGNTLWGNSLNDPAQWEFVGTDKNKAVQTVKDRILAGRAKQPVIFHGQLTGNMDVTIPQLPGGRKVILDGSVNLPEGTLSEDSGTLIFQGHPVIHASVSGSAPVSLNQKDWENRQFIMKTLSLKDADFHLSRNASLNSDIKSDNSHITLGSDRVFVDKNDGTGNYVILEEGTSVPDTVNDRSQYEGNITLDHNSTLDIGSRFTGGIEAYDSAVSITSPDVLLTAPGAFAGSSLTVHDGGHLTALNGLFSDGHIQAGKNSKITLSGTPVKDTANQYAPAVYLTDGYDLTGDNATLEITRGAHASGDIHASAASTVTIGSDTPAELASAETTASAFAGSLLEGYNAAFNGAITGGRADVSMHNALWTLGGDSAIHTLTVRNSRISSEGDRTFRTLTVNKLDATGSDFVLRTDLKNADKINVTEKATGSDNSLNVSFMKDPAQGQSLNIPLVTAPAGTSAEMFKAGTRMIGFSRVTPTLHVDTSGGNTKWILDGFKAEADKAAAAKADSFMNAGYKNFMTEVNNLNKRMGDLRDTNGDAGAWARIMSGAGSADGGYSDNYTHVQVGFDKKHELDGVDLFTGVTMTYTDSSADSHAFSGKTKSVGGGLYASALFESGAYIDLIGKYIHHDNDYTGNFAGLGTKHYNTHSWYAGAETGYRYHLTEETFIEPQAELVYGAVSGKTFRWKDGDMDLSMKNRDFSPLIGRTGIELGKTFSGKDWSVTARAGTSWQFDLLNNGETVLRDASGEKRIKGEKDSRMLFNVGMNAQIKDNMRFGLEFEKSAFGKYNVDNAVNANFRYMF.

The N-terminal stretch at M1–A55 is a signal peptide. The Peptidase S6 domain maps to G56–Q301. Residues H127, D155, and S258 each act as charge relay system in the active site. The 267-residue stretch at D1105–F1371 folds into the Autotransporter domain.

Cleaved to release the mature protein from the outer membrane.

Its subcellular location is the periplasm. It localises to the secreted. It is found in the cell surface. The protein resides in the cell outer membrane. Functionally, involved in virulence of uropathogenic E.coli although it is not known how it contributes to it. Has no mucinase activity. The chain is Serine protease pic autotransporter (pic) from Escherichia coli O6:H1 (strain CFT073 / ATCC 700928 / UPEC).